The sequence spans 237 residues: Alpha-S1-casein (237 aa).

The N-terminal stretch at 1–15 is a signal peptide; the sequence is MKLLIFSCLVTLALA. A disordered region spans residues 39-60; it reads EDPIPVSEASSSEESVHQLNRD. Phosphoserine is present on residues Ser79, Ser80, and Ser81.

Belongs to the alpha-casein family. Mammary gland specific. Secreted in milk.

It localises to the secreted. Important role in the capacity of milk to transport calcium phosphate. The protein is Alpha-S1-casein (CSN1S1) of Notamacropus eugenii (Tammar wallaby).